Here is a 171-residue protein sequence, read N- to C-terminus: Co-chaperone protein HscB (171 aa).

The J domain occupies 2–74; the sequence is DYFTLFGLPA…LTRAEYLLSL (73 aa).

The protein belongs to the HscB family. As to quaternary structure, interacts with HscA and stimulates its ATPase activity. Interacts with IscU.

In terms of biological role, co-chaperone involved in the maturation of iron-sulfur cluster-containing proteins. Seems to help targeting proteins to be folded toward HscA. The sequence is that of Co-chaperone protein HscB from Salmonella paratyphi A (strain AKU_12601).